We begin with the raw amino-acid sequence, 333 residues long: MITEPRLLLTVGEPAGIGPDICLQLAFHALPSGVLLIGDLHCLRSRALTLGLSLRLEPWLEGNPWPALERGVLHVLDVPLAQPCRPGRLDMANAPAVLATLDKAMHLLRAGAADALVTAPVHKGIINDAGIPFTGHTEYLAAACGSPKVVMLLAGRGLRVALATTHLPLAQVAAAVTQEGLEGTLRILHRALREDFALSEPRILVAGLNPHAGEGGHLGHEEQDVIAPVIAALQGESLRISGPWPADTLFTPRLLEDADAVLAMYHDQGLPVLKYHAFGEAVNITLGLPIVRTSVDHGTALDIAGTGRAEGGSLLRALDNAAEIVRNRRAAGC.

Residues H136 and T137 each contribute to the substrate site. A divalent metal cation is bound by residues H166, H211, and H266. 3 residues coordinate substrate: K274, N283, and R292.

Belongs to the PdxA family. Homodimer. The cofactor is Zn(2+). It depends on Mg(2+) as a cofactor. Requires Co(2+) as cofactor.

The protein resides in the cytoplasm. The enzyme catalyses 4-(phosphooxy)-L-threonine + NAD(+) = 3-amino-2-oxopropyl phosphate + CO2 + NADH. Its pathway is cofactor biosynthesis; pyridoxine 5'-phosphate biosynthesis; pyridoxine 5'-phosphate from D-erythrose 4-phosphate: step 4/5. Catalyzes the NAD(P)-dependent oxidation of 4-(phosphooxy)-L-threonine (HTP) into 2-amino-3-oxo-4-(phosphooxy)butyric acid which spontaneously decarboxylates to form 3-amino-2-oxopropyl phosphate (AHAP). The sequence is that of 4-hydroxythreonine-4-phosphate dehydrogenase from Acidithiobacillus ferrooxidans (strain ATCC 23270 / DSM 14882 / CIP 104768 / NCIMB 8455) (Ferrobacillus ferrooxidans (strain ATCC 23270)).